The primary structure comprises 428 residues: Enolase (428 aa).

Q163 contributes to the (2R)-2-phosphoglycerate binding site. The active-site Proton donor is E205. The Mg(2+) site is built by D242, E286, and D313. (2R)-2-phosphoglycerate is bound by residues K338, R367, S368, and K389. The active-site Proton acceptor is the K338.

Belongs to the enolase family. Mg(2+) serves as cofactor.

It is found in the cytoplasm. The protein resides in the secreted. The protein localises to the cell surface. The catalysed reaction is (2R)-2-phosphoglycerate = phosphoenolpyruvate + H2O. It participates in carbohydrate degradation; glycolysis; pyruvate from D-glyceraldehyde 3-phosphate: step 4/5. Functionally, catalyzes the reversible conversion of 2-phosphoglycerate (2-PG) into phosphoenolpyruvate (PEP). It is essential for the degradation of carbohydrates via glycolysis. The sequence is that of Enolase from Acidovorax ebreus (strain TPSY) (Diaphorobacter sp. (strain TPSY)).